A 312-amino-acid chain; its full sequence is MYSMLETEIKTPQPTRAARGEPARAATAKVGGAAAADGCRSDQDRVKRPMNAFMVWSRGQRRKMAQENPKMHNSEISKRLGADWKLLSDAEKRPFIDEAKRLRAVHMKEYPDYKYRPRRKTKTLLKKDKYSLPGNLWPPGSAGAAAVGVGQRIDTYAHMNGWTNGAYSLMQDQLGYGQHPGMNSPQLQQMHRYDMPGLQYSPMMSTAQTYMNAGLHLQHVPRPYGQQPSTAMSLGSMGSVVKSEPSSAPPAITSHSQRACLGELRDMISMYLGPGGDATHPSALQGSRLHSVHQHYQSAGTRVNGTVPLTHI.

Positions Met-1 to Ala-23 are disordered. The HMG box DNA-binding region spans Val-46 to Lys-114. The segment at Ser-229–Ser-254 is disordered. The 9aaTAD signature appears at Glu-263–Pro-274.

In terms of tissue distribution, first expressed in the embryonic neural plate shortly before closure and expression continues in the neural tube. From stage 16 onwards, expressed throughout the CNS including the brain, with expression predominant in the undifferentiated cells of the neural epithelium. Also expressed at a low level in the retina and the gut epithelium.

The protein localises to the nucleus. Its function is as follows. Transcription factor that may function as a switch in neuronal development. Keeps neural cells undifferentiated by counteracting the activity of proneural proteins and suppresses neuronal differentiation. The chain is Transcription factor SOX-3 (SOX3) from Gallus gallus (Chicken).